Here is a 44-residue protein sequence, read N- to C-terminus: Cuticle protein CP459 (44 aa).

Tandem repeats lie at residues 3-20 and 27-44.

In terms of tissue distribution, calcified shell.

The protein is Cuticle protein CP459 of Cancer pagurus (Rock crab).